The following is a 242-amino-acid chain: MPGAVSATPPPELATAARTLFGDRLSLAVAYAGLLVTDGVVRGLIGPREAPRIWDRHLLNCAAVAERIPLGSTVLDVGSGAGLPGLVLAVARPDLSVTLVEPLARRTAFLVEAVAQLDLAASVQVVRGRAEEIASGGGGVEPLTGDVVTARAVAPLDRLARWCLPLAVPGGRLVALKGASAVEEVAEHAAIVDRLGGGRPEVHHCGAGVVEPPTTVIEIARERVVAPARPKPAKRSRGGRRR.

S-adenosyl-L-methionine is bound by residues glycine 78, leucine 83, 130-131, and arginine 151; that span reads AE.

This sequence belongs to the methyltransferase superfamily. RNA methyltransferase RsmG family.

Its subcellular location is the cytoplasm. Its function is as follows. Specifically methylates the N7 position of guanine in position 518 of 16S rRNA. The chain is Ribosomal RNA small subunit methyltransferase G from Salinispora tropica (strain ATCC BAA-916 / DSM 44818 / JCM 13857 / NBRC 105044 / CNB-440).